A 407-amino-acid chain; its full sequence is Lysine racemase (407 aa).

The N-terminal stretch at 1-18 (MSLGIRYLALLPLFVITA) is a signal peptide. Cysteine 19 carries the N-palmitoyl cysteine lipid modification. A lipid anchor (S-diacylglycerol cysteine) is attached at cysteine 19. A disulfide bridge connects residues cysteine 70 and cysteine 96. Lysine 74 (proton acceptor) is an active-site residue. Lysine 74 carries the post-translational modification N6-(pyridoxal phosphate)lysine. Residue arginine 173 coordinates substrate. The Proton acceptor role is filled by tyrosine 299. Substrate is bound at residue methionine 347.

The protein belongs to the alanine racemase family. Bsr subfamily. As to quaternary structure, forms a head-to-tail homodimer in the structure. The cofactor is pyridoxal 5'-phosphate.

It localises to the cell membrane. It is found in the periplasm. The catalysed reaction is L-lysine = D-lysine. It carries out the reaction L-arginine = D-arginine. With respect to regulation, the racemization activity of Lyr is completely inhibited by hydroxylamine. In terms of biological role, amino-acid racemase that catalyzes the interconversion of L-lysine and D-lysine. To a lesser extent, is also able to interconvert arginine enantiomers. Cannot use methionine, asparagine, alanine, leucine, glutamine, phenylalanine and histidine as substrates. The polypeptide is Lysine racemase (Proteus mirabilis).